The chain runs to 300 residues: Cation-efflux pump FieF (300 aa).

The helical transmembrane segment at 24–44 (LLIKIFAWWYTGSVSILAALV) threads the bilayer. Positions 45 and 49 each coordinate Zn(2+). A run of 2 helical transmembrane segments spans residues 82-102 (AALA…LTGI) and 114-134 (AGVG…LVTF). Zn(2+) contacts are provided by His153 and Asp157. 2 helical membrane-spanning segments follow: residues 156–176 (SDVM…YGWH) and 178–198 (ADAL…LRMG).

Belongs to the cation diffusion facilitator (CDF) transporter (TC 2.A.4) family. FieF subfamily. Homodimer.

The protein localises to the cell inner membrane. It carries out the reaction Zn(2+)(in) + H(+)(out) = Zn(2+)(out) + H(+)(in). It catalyses the reaction Cd(2+)(in) + H(+)(out) = Cd(2+)(out) + H(+)(in). The enzyme catalyses Fe(2+)(in) + H(+)(out) = Fe(2+)(out) + H(+)(in). In terms of biological role, divalent metal cation transporter which exports Zn(2+), Cd(2+) and possibly Fe(2+). May be involved in zinc and iron detoxification by efflux. The sequence is that of Cation-efflux pump FieF from Klebsiella pneumoniae (strain 342).